A 188-amino-acid chain; its full sequence is Ion-translocating oxidoreductase complex subunit B (188 aa).

Residues 1–26 (MNGVLLAIGVLLPICLASGALLGYAA) are hydrophobic. Residues 32-90 (QGDPVAERVNALLPQTQCGQCGYPGCKPYAEAIAAGDRINKCPPGGEATIQALADLLDL) form the 4Fe-4S domain. 12 residues coordinate [4Fe-4S] cluster: Cys49, Cys52, Cys57, Cys73, Cys113, Cys116, Cys119, Cys123, Cys143, Cys146, Cys149, and Cys153. 2 consecutive 4Fe-4S ferredoxin-type domains span residues 104-133 (RVAYIREAECIGCTKCIQACPVDAIVGAAR) and 134-163 (LMHTVIADECTGCDLCLEPCPVDCIEMREI).

It belongs to the 4Fe4S bacterial-type ferredoxin family. RnfB subfamily. The complex is composed of six subunits: RnfA, RnfB, RnfC, RnfD, RnfE and RnfG. It depends on [4Fe-4S] cluster as a cofactor.

Its subcellular location is the cell inner membrane. Its function is as follows. Part of a membrane-bound complex that couples electron transfer with translocation of ions across the membrane. This Pseudomonas paraeruginosa (strain DSM 24068 / PA7) (Pseudomonas aeruginosa (strain PA7)) protein is Ion-translocating oxidoreductase complex subunit B.